The chain runs to 838 residues: Shutoff protein (838 aa).

A disordered region spans residues 1 to 102 (MEDQHSAASE…EQEEDSPDRY (102 aa)). The segment covering 18-35 (TLPPPPPPPPPPTSPPPS) has biased composition (pro residues). Over residues 52-65 (TCSSSSSSSASSEC) the composition is skewed to low complexity. The segment at 291–353 (LMQTLLVRRA…ACMVTVQLHC (63 aa)) is binding to host EIF4G. The 119-residue stretch at 356-474 (TFLTSREMVR…SLWTGFDERT (119 aa)) folds into the RRM domain. 2 positions are modified to phosphotyrosine; by host: tyrosine 373 and tyrosine 690. The tract at residues 693–838 (PHTGEELNTA…QELRRPQRGS (146 aa)) is disordered. Over residues 701–710 (TAAPSTAHHA) the composition is skewed to low complexity. Basic and acidic residues-rich tracts occupy residues 737–746 (SYADRVRSEL) and 770–787 (HSRD…DQRQ). Over residues 813–829 (QALLHQQQQQQEHQPAQ) the composition is skewed to low complexity.

The protein belongs to the adenoviridae shutoff protein family. Monomer. Interacts with hexon protein; this interaction allows chaperoning and trimerization of hexon proteins. Interacts (via N-terminus) with host initiation factor EIF4G (via C-terminus). Interacts (via RRM domain) with viral mRNAs that contain the tripartite leader; this interaction allows ribosome shunting and expression of viral late mRNAs. Post-translationally, might be cleaved by the viral protease. Phosphorylated. Tyrosine phosphorylation enhances preferential binding to tripartite leader mRNAs and allows ribosome shunting. In terms of processing, methylated. Asymmetric dimethylation by host PRMT1 of the Arg/Gly-rich region may regulate shutoff protein binding to hexon and promote the capsid assembly in the nucleus.

It localises to the host cytoplasm. Its function is as follows. Protein that inhibits host translation while promoting late viral translation by ribosome shunting. Blocks host cap-dependent translation by binding to eIF4G, displacing MKNK1 from cap initiation complexes and preventing EIF4E phosphorylation. Binds to the tripartite leader sequence of viral late mRNAs and recruits host eIF4G, PABPC1/poly-A binding protein and 40S ribosomes subunits on viral mRNAs, allowing ribosome shunting and efficient translation of late viral mRNAs even though conventional translation via ribosome scanning from the cap has been shut off in the host cell. During assembly, acts as a chaperone protein that helps hexon proteins assembly into trimers. This Porcine adenovirus A serotype 3 (PAdV-3) protein is Shutoff protein.